The chain runs to 808 residues: Phospholipase D alpha 1 (808 aa).

A C2 domain is found at 1–125 (MAHYLMHGTL…IRGDQVDRWV (125 aa)). Asp186 provides a ligand contact to Ca(2+). In terms of domain architecture, PLD phosphodiesterase 1 spans 326–364 (TMFTHHQKIVVVDGEMPSGESQMRRIVSFVGGIDLCDGR). Catalysis depends on residues His331, Lys333, and Asp338. His331 provides a ligand contact to a 1,2-diacyl-sn-glycero-3-phosphate. Ca(2+) contacts are provided by His370 and His404. 2 residues coordinate a 1,2-diacyl-sn-glycero-3-phosphate: Gln520 and His659. The region spanning 654–681 (FMIYVHTKMMIVDDEYIIVGSANINQRS) is the PLD phosphodiesterase 2 domain. Catalysis depends on residues His659, Lys661, and Asp666. Glu720 provides a ligand contact to Ca(2+).

It belongs to the phospholipase D family. C2-PLD subfamily. Ca(2+) serves as cofactor.

The catalysed reaction is a 1,2-diacyl-sn-glycero-3-phosphocholine + H2O = a 1,2-diacyl-sn-glycero-3-phosphate + choline + H(+). Hydrolyzes glycerol-phospholipids at the terminal phosphodiesteric bond. Plays an important role in various cellular processes. The polypeptide is Phospholipase D alpha 1 (Carica papaya (Papaya)).